The chain runs to 166 residues: Interferon gamma (166 aa).

Positions 1 to 23 (MKYTSSFLALLLSVLLGFSGSYG) are cleaved as a signal peptide. Gln24 bears the Pyrrolidone carboxylic acid mark. N-linked (GlcNAc...) asparagine glycosylation is found at Asn39 and Asn106.

It belongs to the type II (or gamma) interferon family. In terms of assembly, homodimer. Interacts with IFNGR1 (via extracellular domain); this interaction promotes IFNGR1 dimerization. In terms of tissue distribution, released primarily from activated T lymphocytes.

The protein localises to the secreted. Functionally, type II interferon produced by immune cells such as T-cells and NK cells that plays crucial roles in antimicrobial, antiviral, and antitumor responses by activating effector immune cells and enhancing antigen presentation. Primarily signals through the JAK-STAT pathway after interaction with its receptor IFNGR1 to affect gene regulation. Upon IFNG binding, IFNGR1 intracellular domain opens out to allow association of downstream signaling components JAK2, JAK1 and STAT1, leading to STAT1 activation, nuclear translocation and transcription of IFNG-regulated genes. Many of the induced genes are transcription factors such as IRF1 that are able to further drive regulation of a next wave of transcription. Plays a role in class I antigen presentation pathway by inducing a replacement of catalytic proteasome subunits with immunoproteasome subunits. In turn, increases the quantity, quality, and repertoire of peptides for class I MHC loading. Increases the efficiency of peptide generation also by inducing the expression of activator PA28 that associates with the proteasome and alters its proteolytic cleavage preference. Up-regulates as well MHC II complexes on the cell surface by promoting expression of several key molecules such as cathepsins B/CTSB, H/CTSH, and L/CTSL. Participates in the regulation of hematopoietic stem cells during development and under homeostatic conditions by affecting their development, quiescence, and differentiation. The protein is Interferon gamma (IFNG) of Capra hircus (Goat).